A 34-amino-acid polypeptide reads, in one-letter code: Potassium channel toxin alpha-KTx 6 hetlaxin (34 aa).

4 disulfide bridges follow: C3/C24, C9/C29, C13/C31, and C19/C34. Position 34 is a cysteine amide (C34).

Contains 4 disulfide bonds. As to expression, expressed by the venom gland.

Its subcellular location is the secreted. Binds to voltage-gated potassium channels Kv1.3/KCNA3 (IC(50)=0.48 uM) and Kv1.1/KCNA1 (IC(50)=6.7 uM) and inhibits channel activity. The polypeptide is Potassium channel toxin alpha-KTx 6 hetlaxin (Heterometrus laoticus (Thai giant scorpion)).